A 346-amino-acid chain; its full sequence is Histone PARylation factor 1 (346 aa).

Position 1 is an N-acetylmethionine (Met-1). Over residues 1–10 the composition is skewed to basic residues; it reads MVGGGAKRRL. Residues 1 to 29 form a disordered region; that stretch reads MVGGGAKRRLRGEGPQCEKPVDMKKSKSC. Lys-19 is modified (N6-acetyllysine). A compositionally biased stretch (basic and acidic residues) spans 19–29; the sequence is KPVDMKKSKSC. Ser-97 is subject to ADP-ribosylserine. 2 positions are modified to N6-acetyllysine: Lys-186 and Lys-233. Asp-235 bears the PolyADP-ribosyl aspartic acid mark. Position 238 is an ADP-ribosyltyrosine (Tyr-238). Glu-240 is subject to PolyADP-ribosyl glutamic acid. Residues 242–346 form an interaction with PARP1 region; that stretch reads PETDASLRRI…SQDDVDQLAA (105 aa). The active-site Proton donor is the Glu-284.

Belongs to the HPF1 family. As to quaternary structure, interacts with PARP1 (via the PARP catalytic domain). Interacts with PARP2 (via the PARP catalytic domain). Interacts with core nucleosomes in a PARP1- and PARP2-dependent manner.

It localises to the chromosome. It is found in the nucleus. In terms of biological role, cofactor for serine ADP-ribosylation that confers serine specificity on PARP1 and PARP2 and plays a key role in DNA damage response. Initiates the repair of double-strand DNA breaks: recruited to DNA damage sites by PARP1 and PARP2 and switches the amino acid specificity of PARP1 and PARP2 from aspartate or glutamate to serine residues, licensing serine ADP-ribosylation of target proteins. Serine ADP-ribosylation of target proteins, such as histones, promotes decompaction of chromatin and the recruitment of repair factors leading to the reparation of DNA strand breaks. Serine ADP-ribosylation of proteins constitutes the primary form of ADP-ribosylation of proteins in response to DNA damage. HPF1 acts by completing the active site of PARP1 and PARP2: forms a composite active site composed of residues from HPF1 and PARP1 or PARP2. While HPF1 promotes the initiation of serine ADP-ribosylation, it restricts the polymerase activity of PARP1 and PARP2 in order to limit the length of poly-ADP-ribose chains. HPF1 also promotes tyrosine ADP-ribosylation, probably by conferring tyrosine specificity on PARP1. The protein is Histone PARylation factor 1 of Bos taurus (Bovine).